Here is a 464-residue protein sequence, read N- to C-terminus: Tyrosine--tRNA ligase, mitochondrial (464 aa).

Residue Tyr-61 participates in L-tyrosine binding. Residue Asp-65 coordinates ATP. The short motif at 66–75 is the 'HIGH' region element; the sequence is PTADSLHVGN. Residues Asp-105, Tyr-209, Gln-213, Asp-216, and Gln-235 each coordinate L-tyrosine. A 'KMSKS' region motif is present at residues 270–274; that stretch reads KFGKS. Position 273 (Lys-273) interacts with ATP.

Belongs to the class-I aminoacyl-tRNA synthetase family. As to quaternary structure, homodimer.

It is found in the mitochondrion matrix. The catalysed reaction is tRNA(Tyr) + L-tyrosine + ATP = L-tyrosyl-tRNA(Tyr) + AMP + diphosphate + H(+). In terms of biological role, catalyzes the attachment of tyrosine to tRNA(Tyr) in a two-step reaction: tyrosine is first activated by ATP to form Tyr-AMP and then transferred to the acceptor end of tRNA(Tyr). This Drosophila melanogaster (Fruit fly) protein is Tyrosine--tRNA ligase, mitochondrial.